The primary structure comprises 530 residues: Serendipity locus protein alpha (530 aa).

As to expression, transient expression in blastoderm from nuclear cycle 11 to the onset of gastrulation.

The protein resides in the cytoplasm. It is found in the cell membrane. Functionally, required for the cellularization of the syncytial blastoderm embryo. Involved in the localization of the actin filaments just prior to and during plasma membrane invagination. Sry-alpha together with nullo and bnk may provide auxiliary functions, by acting both to stabilize a large and dynamic microfilament structure and regulate its functions. The sequence is that of Serendipity locus protein alpha (Sry-alpha) from Drosophila melanogaster (Fruit fly).